Consider the following 459-residue polypeptide: Methylenetetrahydrofolate--tRNA-(uracil-5-)-methyltransferase TrmFO (459 aa).

11–16 (GAGLAG) lines the FAD pocket.

It belongs to the MnmG family. TrmFO subfamily. The cofactor is FAD.

It is found in the cytoplasm. It catalyses the reaction uridine(54) in tRNA + (6R)-5,10-methylene-5,6,7,8-tetrahydrofolate + NADH + H(+) = 5-methyluridine(54) in tRNA + (6S)-5,6,7,8-tetrahydrofolate + NAD(+). The catalysed reaction is uridine(54) in tRNA + (6R)-5,10-methylene-5,6,7,8-tetrahydrofolate + NADPH + H(+) = 5-methyluridine(54) in tRNA + (6S)-5,6,7,8-tetrahydrofolate + NADP(+). In terms of biological role, catalyzes the folate-dependent formation of 5-methyl-uridine at position 54 (M-5-U54) in all tRNAs. The protein is Methylenetetrahydrofolate--tRNA-(uracil-5-)-methyltransferase TrmFO of Synechococcus sp. (strain CC9311).